A 715-amino-acid chain; its full sequence is L-type lectin-domain containing receptor kinase VIII.1 (715 aa).

The first 21 residues, Met1–Thr21, serve as a signal peptide directing secretion. The tract at residues Thr22 to Ser247 is legume-lectin like. Over Thr22–Thr317 the chain is Extracellular. Residues Asn126 and Asn195 are each glycosylated (N-linked (GlcNAc...) asparagine). A disordered region spans residues Gly255–Thr296. Residues Ser283–Thr296 show a composition bias toward low complexity. Residues Ile318–Trp338 traverse the membrane as a helical segment. The Cytoplasmic segment spans residues Val339–Val715. The 301-residue stretch at Phe376–Leu676 folds into the Protein kinase domain. Residues Ile382 to Val390 and Lys405 contribute to the ATP site. Residue Asp500 is the Proton acceptor of the active site.

The protein in the C-terminal section; belongs to the protein kinase superfamily. Ser/Thr protein kinase family. This sequence in the N-terminal section; belongs to the leguminous lectin family.

It localises to the cell membrane. The catalysed reaction is L-seryl-[protein] + ATP = O-phospho-L-seryl-[protein] + ADP + H(+). It carries out the reaction L-threonyl-[protein] + ATP = O-phospho-L-threonyl-[protein] + ADP + H(+). This Arabidopsis thaliana (Mouse-ear cress) protein is L-type lectin-domain containing receptor kinase VIII.1 (LECRK81).